An 80-amino-acid chain; its full sequence is Serine rich endogenous peptide 18 (80 aa).

The N-terminal stretch at 1–25 (MYNVVVCLLTLSFLLLTGLSNTAEA) is a signal peptide. An SCOOP motif motif is present at residues 45–59 (KAEVGGSCSPHAHGR). A disordered region spans residues 50–80 (GSCSPHAHGRGPPNRPGSSNIPGSPKRCTKP). A SxS motif essential for MIK2 binding motif is present at residues 51–53 (SCS).

Belongs to the serine rich endogenous peptide (SCOOP) phytocytokine family. As to quaternary structure, interacts with MIK2 (via extracellular leucine-rich repeat domain); this interaction triggers the formation of complex between MIK2 and the BAK1/SERK3 and SERK4 coreceptors, and subsequent BAK1 activation by phosphorylation.

It is found in the cell membrane. The protein resides in the secreted. The protein localises to the extracellular space. Its subcellular location is the apoplast. Brassicaceae-specific phytocytokine (plant endogenous peptide released into the apoplast) perceived by MIK2 in a BAK1/SERK3 and SERK4 coreceptors-dependent manner, that modulates various physiological and antimicrobial processes including growth prevention and reactive oxygen species (ROS) response regulation. The protein is Serine rich endogenous peptide 18 of Arabidopsis thaliana (Mouse-ear cress).